Here is a 481-residue protein sequence, read N- to C-terminus: MVLLAMGLVIYLATSKYGNIRLGEGKPEYSTLSWLFMFICAGLGSSTLYWGVAEWAYYYQTPGLNIAPRSQQALEFSVPYSFFHWGISAWATYTLASLIMAYHFHVRKNKGLSLSGIIAAITGVRPQGPWGKLVDLMFLIATVGALTISLVVTAATFTRGLSALTGLPDNFTVQAFVILLSGGIFCLSSWIGINNGLQRLSKMVGWGAFLLPLLVLIVGPTEFITNSIINAIGLTTQNFLQMSLFTDPLGDGSFTRNWTVFYWLWWISYTPGVAMFVTRVSRGRKIKEVIWGLILGSTVGCWFFFGVMESYAIHQFINGVINVPQVLETLGGETAVQQVLMSLPAGKLFLAAYLGVMIIFLASHMDAVAYTMAATSTRNLQEGDDPDRGLRLFWCVVITLIPLSILFTGASLETMKTTVVLTALPFLVILLVKVGGFIRWLKQDYADIPAHQVEHYLPQTPVEALEKTPVLPAGTVFKGDN.

10 consecutive transmembrane segments (helical) span residues 32-52, 82-102, 137-157, 173-193, 204-224, 258-278, 289-309, 348-368, 392-412, and 418-438; these read LSWLFMFICAGLGSSTLYWGV, FFHWGISAWATYTLASLIMAY, MFLIATVGALTISLVVTAATF, VQAFVILLSGGIFCLSSWIGI, VGWGAFLLPLLVLIVGPTEFI, WTVFYWLWWISYTPGVAMFVT, VIWGLILGSTVGCWFFFGVME, LFLAAYLGVMIIFLASHMDAV, LFWCVVITLIPLSILFTGASL, and TVVLTALPFLVILLVKVGGFI.

The protein belongs to the BCCT transporter (TC 2.A.15) family.

The protein resides in the cell inner membrane. Probable transporter whose substrate is unknown. Is not involved in aerobic D-malate transport. This is an uncharacterized protein from Escherichia coli (strain K12).